We begin with the raw amino-acid sequence, 177 residues long: ATP synthase subunit delta (177 aa).

The protein belongs to the ATPase delta chain family. F-type ATPases have 2 components, F(1) - the catalytic core - and F(0) - the membrane proton channel. F(1) has five subunits: alpha(3), beta(3), gamma(1), delta(1), epsilon(1). F(0) has three main subunits: a(1), b(2) and c(10-14). The alpha and beta chains form an alternating ring which encloses part of the gamma chain. F(1) is attached to F(0) by a central stalk formed by the gamma and epsilon chains, while a peripheral stalk is formed by the delta and b chains.

The protein resides in the cell inner membrane. Functionally, f(1)F(0) ATP synthase produces ATP from ADP in the presence of a proton or sodium gradient. F-type ATPases consist of two structural domains, F(1) containing the extramembraneous catalytic core and F(0) containing the membrane proton channel, linked together by a central stalk and a peripheral stalk. During catalysis, ATP synthesis in the catalytic domain of F(1) is coupled via a rotary mechanism of the central stalk subunits to proton translocation. This protein is part of the stalk that links CF(0) to CF(1). It either transmits conformational changes from CF(0) to CF(1) or is implicated in proton conduction. The protein is ATP synthase subunit delta of Shewanella sp. (strain MR-4).